A 294-amino-acid polypeptide reads, in one-letter code: 2-oxo-3-(phosphooxy)propyl 3-oxoalkanoate synthase (294 aa).

Belongs to the AfsA family.

It carries out the reaction a medium-chain 3-oxoacyl-[ACP] + dihydroxyacetone phosphate = a (4-alkanoyl-5-oxo-2,5-dihydrofuran-3-yl)methyl phosphate + holo-[ACP] + H2O. Involved in the biosynthesis of virginiae butanolide (VB), a gamma-butyrolactone autoregulator that triggers the production of the streptogramin antibiotic virginiamycin. The polypeptide is 2-oxo-3-(phosphooxy)propyl 3-oxoalkanoate synthase (Streptomyces virginiae (Streptomyces cinnamonensis)).